The primary structure comprises 274 residues: 2,3,4,5-tetrahydropyridine-2,6-dicarboxylate N-succinyltransferase (274 aa).

Arg104 and Asp141 together coordinate substrate.

It belongs to the transferase hexapeptide repeat family. As to quaternary structure, homotrimer.

It localises to the cytoplasm. It carries out the reaction (S)-2,3,4,5-tetrahydrodipicolinate + succinyl-CoA + H2O = (S)-2-succinylamino-6-oxoheptanedioate + CoA. It participates in amino-acid biosynthesis; L-lysine biosynthesis via DAP pathway; LL-2,6-diaminopimelate from (S)-tetrahydrodipicolinate (succinylase route): step 1/3. The polypeptide is 2,3,4,5-tetrahydropyridine-2,6-dicarboxylate N-succinyltransferase (Shigella dysenteriae serotype 1 (strain Sd197)).